Consider the following 447-residue polypeptide: NADH-quinone oxidoreductase subunit F (447 aa).

61 to 70 (GRGGAGFSTG) is a binding site for NAD(+). 174-221 (GAGRYICGEETALINSLEGRRANPRAKPPFPAVFGLWGKPTCVNNVET) contributes to the FMN binding site. [4Fe-4S] cluster-binding residues include Cys352, Cys355, Cys358, and Cys399.

Belongs to the complex I 51 kDa subunit family. As to quaternary structure, composed of 13 different subunits. Subunits NuoCD, E, F, and G constitute the peripheral sector of the complex. The cofactor is [4Fe-4S] cluster. FMN is required as a cofactor.

It carries out the reaction a quinone + NADH + 5 H(+)(in) = a quinol + NAD(+) + 4 H(+)(out). NDH-1 shuttles electrons from NADH, via FMN and iron-sulfur (Fe-S) centers, to quinones in the respiratory chain. Couples the redox reaction to proton translocation (for every two electrons transferred, four hydrogen ions are translocated across the cytoplasmic membrane), and thus conserves the redox energy in a proton gradient. In Buchnera aphidicola subsp. Schizaphis graminum (strain Sg), this protein is NADH-quinone oxidoreductase subunit F (nuoF).